The chain runs to 225 residues: Protein GrpE (225 aa).

2 disordered regions span residues 1 to 44 (MTEE…ENAG) and 183 to 225 (VAVA…PDEG).

This sequence belongs to the GrpE family. Homodimer.

Its subcellular location is the cytoplasm. Its function is as follows. Participates actively in the response to hyperosmotic and heat shock by preventing the aggregation of stress-denatured proteins, in association with DnaK and GrpE. It is the nucleotide exchange factor for DnaK and may function as a thermosensor. Unfolded proteins bind initially to DnaJ; upon interaction with the DnaJ-bound protein, DnaK hydrolyzes its bound ATP, resulting in the formation of a stable complex. GrpE releases ADP from DnaK; ATP binding to DnaK triggers the release of the substrate protein, thus completing the reaction cycle. Several rounds of ATP-dependent interactions between DnaJ, DnaK and GrpE are required for fully efficient folding. The chain is Protein GrpE from Streptomyces coelicolor (strain ATCC BAA-471 / A3(2) / M145).